Consider the following 251-residue polypeptide: MKKAGLLFLVMIVIAVVAAGIGYWKLTGEESDTLRKIVLEECLPNQQQNQNPSPCAEVKPNAGYVVLKDLNGPLQYLLMPTYRINGTESPLLTDPSTPNFFWLAWQARDFMSKKYGQPVPDRAVSLAINSRTGRTQNHFHIHISCIRPDVREQLDNNLANISSRWLPLPGGLRGHEYLARRVTESELVQRSPFIMLAEEVPEAREHMGSYGLAMVRQSDNSFVLLATQRNLLTLNRASAEEIQDHQCEILR.

Residues 4 to 24 (AGLLFLVMIVIAVVAAGIGYW) traverse the membrane as a helical segment.

The protein belongs to the Cdh family.

It localises to the cell inner membrane. It carries out the reaction a CDP-1,2-diacyl-sn-glycerol + H2O = a 1,2-diacyl-sn-glycero-3-phosphate + CMP + 2 H(+). The protein operates within phospholipid metabolism; CDP-diacylglycerol degradation; phosphatidate from CDP-diacylglycerol: step 1/1. The polypeptide is CDP-diacylglycerol pyrophosphatase (Escherichia coli (strain ATCC 8739 / DSM 1576 / NBRC 3972 / NCIMB 8545 / WDCM 00012 / Crooks)).